Reading from the N-terminus, the 419-residue chain is uncharacterized protein (419 aa).

This is an uncharacterized protein from Schizosaccharomyces pombe (strain 972 / ATCC 24843) (Fission yeast).